The primary structure comprises 296 residues: Polyamine aminopropyltransferase (296 aa).

A PABS domain is found at 16–251 (HLWYFEYYTG…GMWSYTFASK (236 aa)). Glutamine 46 contributes to the S-methyl-5'-thioadenosine binding site. Spermidine contacts are provided by histidine 77 and aspartate 101. Residues glutamate 121 and 152-153 (NG) contribute to the S-methyl-5'-thioadenosine site. The active-site Proton acceptor is the aspartate 170. 170 to 173 (DSTD) contacts spermidine.

This sequence belongs to the spermidine/spermine synthase family. In terms of assembly, homotetramer.

It localises to the cytoplasm. The catalysed reaction is S-adenosyl 3-(methylsulfanyl)propylamine + putrescine = S-methyl-5'-thioadenosine + spermidine + H(+). Its pathway is amine and polyamine biosynthesis; spermidine biosynthesis; spermidine from putrescine: step 1/1. Strongly inhibited by S-adenosyl-1,8-diamino-3-thiooctane. Its function is as follows. Catalyzes the irreversible transfer of a propylamine group from the amino donor S-adenosylmethioninamine (decarboxy-AdoMet) to putrescine (1,4-diaminobutane) to yield spermidine. It has lower affinity and lower activity towards 1,3-diaminopropane, cadaverine (1,5-diaminopentane), agmatine, norspermidine and spermidine (in vitro). In Thermotoga maritima (strain ATCC 43589 / DSM 3109 / JCM 10099 / NBRC 100826 / MSB8), this protein is Polyamine aminopropyltransferase.